The primary structure comprises 414 residues: FAD-dependent monooxygenase adaC (414 aa).

Residues Glu-32, Ala-43, Arg-115, Asp-325, and Gly-338 each coordinate FAD.

This sequence belongs to the paxM FAD-dependent monooxygenase family. It depends on FAD as a cofactor.

It catalyses the reaction 3-(2,4-dioxopentyl)-3,6,8,9-tetrahydroxy-1-oxo-1,2,3,4-tetrahydroanthracene-2-carboxyl-[ACP] + NADPH + O2 + H(+) = 3-(2,4-dioxopentyl)-2,3,6,8,9-pentahydroxy-1-oxo-1,2,3,4-tetrahydroanthracene-2-carboxyl-[ACP] + NADP(+) + H2O. It functions in the pathway secondary metabolite biosynthesis. In terms of biological role, FAD-dependent monooxygenase; part of the gene cluster that mediates the biosynthesis of the linear tetracyclic TAN-1612 neuropeptide Y receptor antagonist. The decaketide backbone of TAN-1612 is synthesized by the non-reducing polyketide synthase adaA via condensation of one acetyl-CoA starter unit with 9 malonyl-CoA units. The FAD-dependent monooxygenase adaC then performs hydroxylation at C2 while the polaketide chain is still attached to the NRPKS adaA. The alpha-hydroxylation step at C2 appears to be crucial for the following C18-C1 Claisen cyclization and release of the C9-hydroxyl version of TAN-1612 from the NRPKS adaA, two steps performed by the lactamase-like protein adaB. Finally, the O-methyltransferase adaD performs the C9 O-methylation to complete the biosynthesis of TAN-1612. The polypeptide is FAD-dependent monooxygenase adaC (Aspergillus niger).